The chain runs to 24 residues: Brevinin-1La (24 aa).

Cysteines 18 and 24 form a disulfide.

As to expression, expressed by the skin glands.

The protein localises to the secreted. Functionally, antibacterial activity against Gram-positive bacterium S.aureus and Gram-negative bacterium E.coli. The polypeptide is Brevinin-1La (Rana luteiventris (Columbia spotted frog)).